The chain runs to 438 residues: Ubiquitin carboxyl-terminal hydrolase 27 (438 aa).

In terms of domain architecture, USP spans 78–421 (RGLINLGNTC…EGYLLFYHKQ (344 aa)). Residue Cys-87 is the Nucleophile of the active site. His-380 acts as the Proton acceptor in catalysis.

The protein belongs to the peptidase C19 family. In terms of assembly, interacts with phosphorylated BCL2L11 isoform BIMEL; this interaction leads to BCL2L11 deubiquitination and stabilization.

It localises to the cytoplasm. The protein resides in the cytosol. Its subcellular location is the nucleus. It carries out the reaction Thiol-dependent hydrolysis of ester, thioester, amide, peptide and isopeptide bonds formed by the C-terminal Gly of ubiquitin (a 76-residue protein attached to proteins as an intracellular targeting signal).. Deubiquitinase involved in innate antiviral immunity by mediating deubiquitination of CGAS and RIGI. Negatively regulates RIGI by mediating 'Lys-63'-linked deubiquitination of RIGI, inhibiting type I interferon signaling. Also regulates 'Lys-63'-linked ubiquitination level of MDA5/IFIH1. Acts as a positive regulator of the cGAS-STING pathway by catalyzing 'Lys-48'-linked deubiquitination of CGAS, thereby promoting its stabilization. Can reduce the levels of BCL2L11/BIM ubiquitination and stabilize BCL2L11 in response to the RAF-MAPK-degradation signal. By acting on BCL2L11 levels, may counteract the anti-apoptotic effects of MAPK activity. The sequence is that of Ubiquitin carboxyl-terminal hydrolase 27 from Homo sapiens (Human).